A 482-amino-acid polypeptide reads, in one-letter code: tRNA sulfurtransferase (482 aa).

In terms of domain architecture, THUMP spans 61-165 (DVTLSVLTQT…NDKLNLIIAR (105 aa)). ATP is bound by residues 183 to 184 (LI), Lys265, Gly287, and Gln296. A disulfide bridge connects residues Cys344 and Cys456. The 79-residue stretch at 404–482 (LGSDVVVLDI…GYKNVKVYRP (79 aa)) folds into the Rhodanese domain. Catalysis depends on Cys456, which acts as the Cysteine persulfide intermediate.

It belongs to the ThiI family.

It localises to the cytoplasm. It carries out the reaction [ThiI sulfur-carrier protein]-S-sulfanyl-L-cysteine + a uridine in tRNA + 2 reduced [2Fe-2S]-[ferredoxin] + ATP + H(+) = [ThiI sulfur-carrier protein]-L-cysteine + a 4-thiouridine in tRNA + 2 oxidized [2Fe-2S]-[ferredoxin] + AMP + diphosphate. The enzyme catalyses [ThiS sulfur-carrier protein]-C-terminal Gly-Gly-AMP + S-sulfanyl-L-cysteinyl-[cysteine desulfurase] + AH2 = [ThiS sulfur-carrier protein]-C-terminal-Gly-aminoethanethioate + L-cysteinyl-[cysteine desulfurase] + A + AMP + 2 H(+). It participates in cofactor biosynthesis; thiamine diphosphate biosynthesis. Its function is as follows. Catalyzes the ATP-dependent transfer of a sulfur to tRNA to produce 4-thiouridine in position 8 of tRNAs, which functions as a near-UV photosensor. Also catalyzes the transfer of sulfur to the sulfur carrier protein ThiS, forming ThiS-thiocarboxylate. This is a step in the synthesis of thiazole, in the thiamine biosynthesis pathway. The sulfur is donated as persulfide by IscS. This chain is tRNA sulfurtransferase, found in Aliivibrio fischeri (strain MJ11) (Vibrio fischeri).